The primary structure comprises 466 residues: Vimentin (466 aa).

Residues 1–13 (MSTRSVSSSSYRR) are compositionally biased toward low complexity. The interval 1–32 (MSTRSVSSSSYRRMFGGPGTGSRPSSTRSYVT) is disordered. Serine 2 is subject to N-acetylserine. A head region spans residues 2 to 95 (STRSVSSSSY…FSLADAINTE (94 aa)). Phosphoserine is present on residues serine 5, serine 7, serine 8, serine 9, and serine 10. Serine 7 carries O-linked (GlcNAc) serine; alternate glycosylation. Threonine 20 carries the phosphothreonine modification. A compositionally biased stretch (low complexity) spans 21–32 (GSRPSSTRSYVT). Residues serine 25 and serine 26 each carry the phosphoserine modification. The O-linked (GlcNAc) threonine glycan is linked to threonine 33. Phosphoserine occurs at positions 34, 39, 42, 47, 49, and 51. The O-linked (GlcNAc) serine; alternate glycan is linked to serine 34. Tyrosine 53 is modified (phosphotyrosine). Residues serine 55 and serine 56 each carry the phosphoserine modification. Tyrosine 61 bears the Phosphotyrosine mark. Residues serine 66, serine 72, serine 73, serine 83, and serine 87 each carry the phosphoserine modification. The segment at 96 to 131 (FKNTRTNEKVELQELNDRFANYIDKVRFLEQQNKIL) is coil 1A. Positions 96-131 (FKNTRTNEKVELQELNDRFANYIDKVRFLEQQNKIL) form a coiled coil. The 309-residue stretch at 103–411 (EKVELQELND…KLLEGEESRI (309 aa)) folds into the IF rod domain. Residue lysine 104 forms a Glycyl lysine isopeptide (Lys-Gly) (interchain with G-Cter in SUMO2) linkage. Phosphotyrosine is present on tyrosine 117. 3 positions are modified to N6-acetyllysine; alternate: lysine 120, lysine 129, and lysine 139. N6-succinyllysine; alternate is present on residues lysine 120 and lysine 129. Glycyl lysine isopeptide (Lys-Gly) (interchain with G-Cter in SUMO2); alternate cross-links involve residues lysine 120, lysine 129, and lysine 139. The tract at residues 132 to 153 (LAELEQLKGQGKSRLGDLYEEE) is linker 1. Serine 144 is modified (phosphoserine). Residues 154–245 (MRELRRQVDQ…KLHDEEIQEL (92 aa)) adopt a coiled-coil conformation. Residues 154–245 (MRELRRQVDQ…KLHDEEIQEL (92 aa)) form a coil 1B region. Lysine 168 is modified (N6-acetyllysine). Lysine 188 is modified (N6-acetyllysine; alternate). N6-succinyllysine; alternate is present on lysine 188. The residue at position 214 (serine 214) is a Phosphoserine. N6-acetyllysine; alternate is present on lysine 223. Lysine 223 is covalently cross-linked (Glycyl lysine isopeptide (Lys-Gly) (interchain with G-Cter in SUMO2); alternate). Phosphoserine is present on serine 226. At lysine 235 the chain carries N6-acetyllysine. Residues 246-268 (QAQIQDQHVQIDMDVSKPDLTAA) form a linker 12 region. Residue lysine 262 forms a Glycyl lysine isopeptide (Lys-Gly) (interchain with G-Cter in SUMO2) linkage. The coil 2 stretch occupies residues 269-407 (LRDVRQQYES…ATYRKLLEGE (139 aa)). Lysine 294 is subject to N6-acetyllysine; alternate. Residue lysine 294 is modified to N6-succinyllysine; alternate. Lysine 294 participates in a covalent cross-link: Glycyl lysine isopeptide (Lys-Gly) (interchain with G-Cter in SUMO2); alternate. Serine 299 bears the Phosphoserine mark. Residues 303-407 (NRNNDALRQA…ATYRKLLEGE (105 aa)) are a coiled coil. Lysine 313 is covalently cross-linked (Glycyl lysine isopeptide (Lys-Gly) (interchain with G-Cter in SUMO2)). A Phosphoserine modification is found at serine 325. Residues 326-329 (LTCE) carry the [IL]-x-C-x-x-[DE] motif motif. Position 373 is an N6-acetyllysine; alternate (lysine 373). Residue lysine 373 forms a Glycyl lysine isopeptide (Lys-Gly) (interchain with G-Cter in SUMO2); alternate linkage. Residues 408–466 (ESRIALPLPNFSSLNLRETNLDSLPLVDTHSKRTLLIKTVETRDGQVINETSQHHDDLE) are tail. A phosphoserine mark is found at serine 409, serine 419, and serine 420. A Phosphothreonine modification is found at threonine 426. Serine 430 is modified (phosphoserine). Phosphothreonine is present on threonine 436. The residue at position 438 (serine 438) is a Phosphoserine. A Glycyl lysine isopeptide (Lys-Gly) (interchain with G-Cter in SUMO2) cross-link involves residue lysine 439. Lysine 445 is subject to N6-acetyllysine; alternate. N6-succinyllysine; alternate is present on lysine 445. Lysine 445 participates in a covalent cross-link: Glycyl lysine isopeptide (Lys-Gly) (interchain with G-Cter in SUMO2); alternate. A Glycyl lysine isopeptide (Lys-Gly) (interchain with G-Cter in SUMO1); alternate cross-link involves residue lysine 445. Phosphothreonine occurs at positions 446 and 458. Serine 459 is subject to Phosphoserine.

It belongs to the intermediate filament family. In terms of assembly, homomer assembled from elementary dimers. Identified in complexes that contain VIM, EZR, AHNAK, BFSP1, BFSP2, ANK2, PLEC, PRX and spectrin. Interacts with BCAS3. Interacts with LGSN. Interacts with SYNM. Interacts (via rod region) with PLEC (via CH 1 domain). Interacts with STK33. Interacts with LARP6. Interacts with RAB8B. Interacts with TOR1A; the interaction associates TOR1A with the cytoskeleton. Interacts with TOR1AIP1. Interacts with TOR1AIP1. Interacts with DIAPH1. Interacts with EPPK1; interaction is dependent of higher-order structure of intermediate filament. Interacts with the non-receptor tyrosine kinase SRMS; the interaction leads to phosphorylation of VIM. Interacts with NOD2. Interacts (via head region) with CORO1C. Interacts with HDGF. Interacts with PRKCE (via phorbol-ester/DAG-type 2 domain). Interacts with BFSP2. Interacts with PPL. Interacts with PKP1 and PKP2. Interacts with SCRIB (via PDZ domains); the interaction protects SCRIB from proteasomal degradation and facilitates SCRIB localization to intermediate filaments, the interaction is reduced by cell contact inhibition. Filament disassembly during mitosis is promoted by phosphorylation at Ser-55 as well as by nestin. One of the most prominent phosphoproteins in various cells of mesenchymal origin. Phosphorylation is enhanced during cell division, at which time vimentin filaments are significantly reorganized. Phosphorylation by PKN1 inhibits the formation of filaments. Phosphorylated at Ser-56 by CDK5 during neutrophil secretion in the cytoplasm. Phosphorylated by STK33. Phosphorylated on tyrosine residues by SRMS. In terms of processing, O-glycosylated during cytokinesis at sites identical or close to phosphorylation sites, this interferes with the phosphorylation status. Post-translationally, S-nitrosylation is induced by interferon-gamma and oxidatively-modified low-densitity lipoprotein (LDL(ox)) possibly implicating the iNOS-S100A8/9 transnitrosylase complex.

The protein localises to the cytoplasm. It is found in the cytoskeleton. The protein resides in the nucleus matrix. Its subcellular location is the cell membrane. Its function is as follows. Vimentins are class-III intermediate filaments found in various non-epithelial cells, especially mesenchymal cells. Vimentin is attached to the nucleus, endoplasmic reticulum, and mitochondria, either laterally or terminally. Plays a role in cell directional movement, orientation, cell sheet organization and Golgi complex polarization at the cell migration front. Protects SCRIB from proteasomal degradation and facilitates its localization to intermediate filaments in a cell contact-mediated manner. Functionally, involved with LARP6 in the stabilization of type I collagen mRNAs for CO1A1 and CO1A2. In Canis lupus familiaris (Dog), this protein is Vimentin (VIM).